The chain runs to 186 residues: Agglutinin isolectin 3 (186 aa).

Gln1 is modified (pyrrolidone carboxylic acid). Chitin-binding type-1 domains lie at 1–42 (QRCG…ACWT), 43–85 (SKRC…PCRA), 86–128 (DIKC…ACST), and 129–171 (DKPC…GCDG). Intrachain disulfides connect Cys3–Cys18, Cys12–Cys24, Cys17–Cys31, Cys35–Cys40, Cys46–Cys61, Cys55–Cys67, Cys60–Cys74, Cys78–Cys83, Cys89–Cys104, Cys98–Cys110, Cys103–Cys117, Cys121–Cys126, Cys132–Cys147, Cys141–Cys153, Cys146–Cys160, and Cys164–Cys169. Residue 10–12 (MEC) participates in substrate binding. Position 62 to 73 (62 to 73 (SQYGHCGFGAEY)) interacts with substrate. 114–115 (SE) contributes to the substrate binding site. The propeptide occupies 172–186 (VFAEAIATNSTLLAE). N-linked (GlcNAc...) asparagine glycosylation occurs at Asn180.

Homodimer, u-shaped.

N-acetyl-D-glucosamine / N-acetyl-D-neuraminic acid binding lectin. This is Agglutinin isolectin 3 from Triticum aestivum (Wheat).